The sequence spans 477 residues: Succinate-semialdehyde dehydrogenase [NADP(+)] (477 aa).

NADP(+)-binding positions include 142-143 (WN), 166-169 (KHSE), and 218-219 (GS). Glutamate 240 serves as the catalytic Proton acceptor. Leucine 241 lines the NADP(+) pocket. Cysteine 274 serves as the catalytic Nucleophile. NADP(+) is bound at residue glutamate 371.

This sequence belongs to the aldehyde dehydrogenase family.

It carries out the reaction succinate semialdehyde + NADP(+) + H2O = succinate + NADPH + 2 H(+). It participates in amino-acid degradation; 4-aminobutanoate degradation. Catalyzes the NADP(+) dependent oxidation of succinate semialdehyde to succinate. The polypeptide is Succinate-semialdehyde dehydrogenase [NADP(+)] (ssdA) (Deinococcus radiodurans (strain ATCC 13939 / DSM 20539 / JCM 16871 / CCUG 27074 / LMG 4051 / NBRC 15346 / NCIMB 9279 / VKM B-1422 / R1)).